A 463-amino-acid chain; its full sequence is ATP synthase subunit beta (463 aa).

Position 152–159 (152–159) interacts with ATP; it reads GGAGVGKT.

Belongs to the ATPase alpha/beta chains family. As to quaternary structure, F-type ATPases have 2 components, CF(1) - the catalytic core - and CF(0) - the membrane proton channel. CF(1) has five subunits: alpha(3), beta(3), gamma(1), delta(1), epsilon(1). CF(0) has three main subunits: a(1), b(2) and c(9-12). The alpha and beta chains form an alternating ring which encloses part of the gamma chain. CF(1) is attached to CF(0) by a central stalk formed by the gamma and epsilon chains, while a peripheral stalk is formed by the delta and b chains.

It is found in the cell inner membrane. The enzyme catalyses ATP + H2O + 4 H(+)(in) = ADP + phosphate + 5 H(+)(out). In terms of biological role, produces ATP from ADP in the presence of a proton gradient across the membrane. The catalytic sites are hosted primarily by the beta subunits. In Shewanella putrefaciens (strain CN-32 / ATCC BAA-453), this protein is ATP synthase subunit beta.